Reading from the N-terminus, the 570-residue chain is Zona pellucida sperm-binding protein 4 (570 aa).

An N-terminal signal peptide occupies residues 1–19; the sequence is MWLLQPLLLCVPLSLAVHG. Over 20 to 545 the chain is Extracellular; it reads QQKPQVPDYP…SSSPIDSQAL (526 aa). N-linked (GlcNAc...) asparagine glycosylation occurs at N68. Residues 177–218 enclose the P-type domain; that stretch reads DLCDSVPKWDRLPCASSPITQGDCNKLGCCYKSEANSCYYGN. Residues 223-496 form the ZP domain; the sequence is RCTQDGHFSI…SSCRITCPVA (274 aa). N-linked (GlcNAc...) asparagine glycosylation occurs at N237. T337 carries an O-linked (GalNAc...) threonine glycan. Residues C402 and C476 are joined by a disulfide bond. N477 and N535 each carry an N-linked (GlcNAc...) asparagine glycan. The propeptide at 497 to 570 is removed in mature form; it reads RRRRHSDLHH…VSYLAIRKRR (74 aa). Residues 546-566 form a helical membrane-spanning segment; sequence WMAGLSGTLIFGFLLVSYLAI. The Cytoplasmic segment spans residues 567 to 570; sequence RKRR.

The protein belongs to the ZP domain family. ZPB subfamily. Proteolytically cleaved before the transmembrane segment to yield the secreted ectodomain incorporated in the zona pellucida. In terms of tissue distribution, expressed in oocytes.

It is found in the zona pellucida. Its subcellular location is the cell membrane. Its function is as follows. Component of the zona pellucida, an extracellular matrix surrounding oocytes which mediates sperm binding, induction of the acrosome reaction and prevents post-fertilization polyspermy. The zona pellucida is composed of 3 to 4 glycoproteins, ZP1, ZP2, ZP3, and ZP4. ZP4 may act as a sperm receptor. This Felis catus (Cat) protein is Zona pellucida sperm-binding protein 4 (ZP4).